We begin with the raw amino-acid sequence, 625 residues long: PTS system beta-glucoside-specific EIIBCA component (625 aa).

Residues 1–84 (MTELARKIVA…NSVAGLDEKA (84 aa)) enclose the PTS EIIB type-1 domain. Residues 1-99 (MTELARKIVA…NDDKGNLLNR (99 aa)) lie on the Periplasmic side of the membrane. Cys-24 (phosphocysteine intermediate; for EIIB activity) is an active-site residue. A helical transmembrane segment spans residues 100–120 (FVYVISGIFTPLIGLMAATGI). The 364-residue stretch at 102–465 (YVISGIFTPL…RQPAQGAPQE (364 aa)) folds into the PTS EIIC type-1 domain. Topologically, residues 121 to 140 (LKGMLALALTFQWTTEQSGT) are cytoplasmic. A helical membrane pass occupies residues 141–161 (YLILFSASDALFWFFPIILGY). Residues 162 to 166 (TAGKR) are Periplasmic-facing. The helical transmembrane segment at 167 to 187 (FGGNPFTAMVIGGALVHPLIL) threads the bilayer. Over 188 to 202 (TAFENGQKADALGLD) the chain is Cytoplasmic. A helical transmembrane segment spans residues 203-223 (FLGIPVTLLNYSSSVIPIIFS). Residues 224-244 (AWLCSILERRLNAWLPSAIKN) lie on the Periplasmic side of the membrane. The chain crosses the membrane as a helical span at residues 245–265 (FFTPLLCLMVITPVTFLLVGP). At 266–284 (LSTWISELIAAGYLWLYQA) the chain is on the cytoplasmic side. Residues 285-305 (VPAFAGAVMGGFWQIFVMFGL) form a helical membrane-spanning segment. Over 306-324 (HWGLVPLCINNFTVLGYDT) the chain is Periplasmic. A helical membrane pass occupies residues 325–345 (MIPLLMPAIMAQVGAALGVFL). The Cytoplasmic segment spans residues 346–353 (CERDAQKK). Residues 354-374 (VVAGSAALTSLFGITEPAVYG) traverse the membrane as a helical segment. The Periplasmic portion of the chain corresponds to 375–380 (VNLPRK). The helical transmembrane segment at 381 to 401 (YPFVIACISGALGATIIGYAQ) threads the bilayer. Over 402-403 (TK) the chain is Cytoplasmic. Residues 404 to 424 (VYSFGLPSIFTFMQTIPSTGI) form a helical membrane-spanning segment. Residues 425-431 (DFTVWAS) are Periplasmic-facing. A helical membrane pass occupies residues 432–452 (VIGGVIAIGCAFVGTVMLHFI). At 453-625 (TAKRQPAQGA…AGEPLLSIIR (173 aa)) the chain is on the cytoplasmic side. In terms of domain architecture, PTS EIIA type-1 spans 495 to 599 (DTTFASGLLG…DLTTPVLISN (105 aa)). His-547 (tele-phosphohistidine intermediate; for EIIA activity) is an active-site residue.

It is found in the cell inner membrane. Its function is as follows. The phosphoenolpyruvate-dependent sugar phosphotransferase system (sugar PTS), a major carbohydrate active -transport system, catalyzes the phosphorylation of incoming sugar substrates concomitantly with their translocation across the cell membrane. This system is involved in beta-glucoside transport. Functionally, acts both as a kinase and as a phosphatase on BglG. This is PTS system beta-glucoside-specific EIIBCA component (bglF) from Escherichia coli (strain K12).